We begin with the raw amino-acid sequence, 390 residues long: E3 ubiquitin-protein ligase At4g11680 (390 aa).

A compositionally biased stretch (low complexity) spans 1–19 (MSSSSSTTTNTTTESDSSS). The segment at 1–39 (MSSSSSTTTNTTTESDSSSLPTHIGRSNSDGIIDTTPFL) is disordered. The next 5 membrane-spanning stretches (helical) occupy residues 109–129 (VVFL…AVLI), 142–162 (VWVV…CVEY), 212–232 (MFSF…GQTL), 244–264 (IIFL…ACVI), and 265–285 (GLAV…VADQ). The RING-type; atypical zinc finger occupies 338 to 379 (CCICLCEYEDGVELRELPCNHHFHCTCIDKWLHINSRCPLCK).

The protein resides in the membrane. It catalyses the reaction S-ubiquitinyl-[E2 ubiquitin-conjugating enzyme]-L-cysteine + [acceptor protein]-L-lysine = [E2 ubiquitin-conjugating enzyme]-L-cysteine + N(6)-ubiquitinyl-[acceptor protein]-L-lysine.. It participates in protein modification; protein ubiquitination. Its function is as follows. Mediates E2-dependent protein ubiquitination in vitro. This chain is E3 ubiquitin-protein ligase At4g11680, found in Arabidopsis thaliana (Mouse-ear cress).